Reading from the N-terminus, the 327-residue chain is tRNA-dihydrouridine(20/20a) synthase (327 aa).

FMN is bound by residues 17-19 (PML) and glutamine 69. Residue cysteine 99 is the Proton donor of the active site. FMN is bound by residues lysine 138, histidine 170, 210–212 (NGG), and 232–233 (GR).

This sequence belongs to the Dus family. DusA subfamily. Requires FMN as cofactor.

The catalysed reaction is 5,6-dihydrouridine(20) in tRNA + NADP(+) = uridine(20) in tRNA + NADPH + H(+). The enzyme catalyses 5,6-dihydrouridine(20) in tRNA + NAD(+) = uridine(20) in tRNA + NADH + H(+). It catalyses the reaction 5,6-dihydrouridine(20a) in tRNA + NADP(+) = uridine(20a) in tRNA + NADPH + H(+). It carries out the reaction 5,6-dihydrouridine(20a) in tRNA + NAD(+) = uridine(20a) in tRNA + NADH + H(+). In terms of biological role, catalyzes the synthesis of 5,6-dihydrouridine (D), a modified base found in the D-loop of most tRNAs, via the reduction of the C5-C6 double bond in target uridines. Specifically modifies U20 and U20a in tRNAs. This chain is tRNA-dihydrouridine(20/20a) synthase, found in Pasteurella multocida (strain Pm70).